The chain runs to 303 residues: MLLANAPHNGCSRLQQVTLLRASGAKLHRKRALTVVARTGTPQPRLPLSTQTSASLRAAREQAVLQSLLFAGPDQLLLGVLAGSRLGNGKGAAAVLEAELGGGDCDSVREWLNEQSGSTAAKLQGSGWLRPSDVEFSPAARRVLSLAEAGAEAMGSSSVGTYHLLLVLMGAGGEQQAVQAGAEVASTEQVDGSGMAANSRGSTSGSEQPPRDSDLGLLRSLLDVAGVDRTALEVKLLALAEAGAEMPPAQDSQATAAGVVATLTSVYRQQVARAWHERDDNAFRQAHQNTAMATGPDPDDEYE.

Residues 1 to 37 constitute a chloroplast transit peptide; sequence MLLANAPHNGCSRLQQVTLLRASGAKLHRKRALTVVA. Disordered stretches follow at residues 185–214 and 278–303; these read ASTE…RDSD and RDDN…DEYE.

The protein belongs to the ClpA/ClpB family.

Its subcellular location is the plastid. It is found in the chloroplast. Functionally, accessory protein regulating the assembly of the plastid Clp protease system. This is ATP-dependent Clp protease ATP-binding subunit CLPT3, chloroplastic from Chlamydomonas reinhardtii (Chlamydomonas smithii).